Here is a 207-residue protein sequence, read N- to C-terminus: Mediator of RNA polymerase II transcription subunit 21 (207 aa).

The disordered stretch occupies residues 36-120 (IPPPDVPDAA…APDSPRTFAS (85 aa)). Over residues 91–108 (GEGAQTPGPAAGAGADPN) the composition is skewed to low complexity. The stretch at 146–194 (IDSSEAEQEKRIRELEGELRQVEEERELKMRELKRLRRTLENVLTAVET) forms a coiled coil.

It belongs to the Mediator complex subunit 21 family. Component of the Mediator complex.

Its subcellular location is the nucleus. Its function is as follows. Component of the Mediator complex, a coactivator involved in the regulated transcription of nearly all RNA polymerase II-dependent genes. Mediator functions as a bridge to convey information from gene-specific regulatory proteins to the basal RNA polymerase II transcription machinery. Mediator is recruited to promoters by direct interactions with regulatory proteins and serves as a scaffold for the assembly of a functional preinitiation complex with RNA polymerase II and the general transcription factors. The protein is Mediator of RNA polymerase II transcription subunit 21 (srb7) of Aspergillus fumigatus (strain ATCC MYA-4609 / CBS 101355 / FGSC A1100 / Af293) (Neosartorya fumigata).